We begin with the raw amino-acid sequence, 714 residues long: ATP-dependent zinc metalloprotease FtsH (714 aa).

Over Met1–Gln75 the chain is Cytoplasmic. Residues Phe76–Val96 form a helical membrane-spanning segment. Residues Ser97–Leu188 lie on the Periplasmic side of the membrane. The helical transmembrane segment at Ser189–Ile209 threads the bilayer. Residues Lys210 to Thr714 lie on the Cytoplasmic side of the membrane. Gly280–Thr287 provides a ligand contact to ATP. Zn(2+) is bound at residue His502. Glu503 is a catalytic residue. 2 residues coordinate Zn(2+): His506 and Asp579. Residues Pro688–Thr714 are disordered. The span at Glu699–Thr714 shows a compositional bias: polar residues.

It in the central section; belongs to the AAA ATPase family. The protein in the C-terminal section; belongs to the peptidase M41 family. As to quaternary structure, homohexamer. Zn(2+) is required as a cofactor.

It is found in the cell inner membrane. Acts as a processive, ATP-dependent zinc metallopeptidase for both cytoplasmic and membrane proteins. Plays a role in the quality control of integral membrane proteins. The sequence is that of ATP-dependent zinc metalloprotease FtsH from Ralstonia pickettii (strain 12J).